Reading from the N-terminus, the 125-residue chain is Fatty acid-binding protein, liver-type (125 aa).

It belongs to the calycin superfamily. Fatty-acid binding protein (FABP) family.

It is found in the cytoplasm. The sequence is that of Fatty acid-binding protein, liver-type (fabp1) from Takifugu rubripes (Japanese pufferfish).